The sequence spans 464 residues: Calcitonin gene-related peptide type 1 receptor (464 aa).

Residues Met1–Ala23 form the signal peptide. The Extracellular portion of the chain corresponds to Glu24–Leu139. 6 N-linked (GlcNAc...) asparagine glycosylation sites follow: Asn30, Asn66, Asn118, Asn123, Asn128, and Asn129. Disulfide bonds link Cys48–Cys74, Cys65–Cys105, and Cys88–Cys127. The helical transmembrane segment at Asn140–Phe164 threads the bilayer. Topologically, residues Tyr165–Thr175 are cytoplasmic. A helical transmembrane segment spans residues Leu176–Val198. Residues Ala199–Pro209 lie on the Extracellular side of the membrane. A helical membrane pass occupies residues Val210 to His238. The Cytoplasmic segment spans residues Thr239–Leu252. Residues Met253–Ala273 form a helical membrane-spanning segment. Residues Arg274 to His289 lie on the Extracellular side of the membrane. The tract at residues Thr288–His289 is required for RAMP3 interaction. The helical transmembrane segment at Leu290–Arg314 threads the bilayer. At Val315–Asn329 the chain is on the cytoplasmic side. A helical transmembrane segment spans residues Leu330–Leu351. Residues Phe352 to Asp366 are Extracellular-facing. Residues Tyr367–Phe387 traverse the membrane as a helical segment. The Cytoplasmic portion of the chain corresponds to Asn388–Met464. Residues Ser420 and Ser445 each carry the phosphoserine modification.

The protein belongs to the G-protein coupled receptor 2 family. As to quaternary structure, heterodimer of CALCRL and RAMP1; the receptor complex functions as CGRP receptor. Heterodimer of CALCRL and RAMP2 or CALCRL and RAMP3; the complexes function as adrenomedullin receptor.

It is found in the cell membrane. In terms of biological role, g protein-coupled receptor which specificity is determined by its interaction with receptor-activity-modifying proteins (RAMPs). Together with RAMP1, form the receptor complex for calcitonin-gene-related peptides CALCA/CGRP1 and CALCB/CGRP2. Together with RAMP2 or RAMP3, function as receptor complexes for adrenomedullin (ADM and ADM2). Ligand binding causes a conformation change that triggers signaling via guanine nucleotide-binding proteins (G proteins) and modulates the activity of downstream effectors. Activates cAMP-dependent pathway. The protein is Calcitonin gene-related peptide type 1 receptor of Rattus norvegicus (Rat).